Here is a 435-residue protein sequence, read N- to C-terminus: Flavonol 7-O-rhamnosyltransferase (435 aa).

A UDP-binding site is contributed by Q18. Residue Q18 participates in UDP-beta-L-rhamnose binding. H21 serves as the catalytic Proton acceptor. Residue H21 participates in quercetin binding. The active-site Charge relay is the D119. Positions 250, 315, 332, 336, 337, and 340 each coordinate UDP. UDP-beta-L-rhamnose is bound by residues S250, A315, H332, G336, S337, and E340.

The protein belongs to the UDP-glycosyltransferase family. As to expression, highly expressed in floral buds. Expressed in stems, leaves and flowers. Expressed at low levels in roots and siliques. Expressed on the adaxial side of cotyledons and emerging leaves, in trichomes, root columella cells, and the late elongation/early differentiation zone of roots.

It carries out the reaction quercitrin + UDP-beta-L-rhamnose = quercetin 3,7-bis-O-alpha-L-rhamnoside + UDP + H(+). It catalyses the reaction quercetin 3-O-beta-D-glucoside + UDP-beta-L-rhamnose = quercetin 3-O-beta-D-glucoside-7-O-alpha-L-rhamnoside + UDP + H(+). The protein operates within flavonoid metabolism. In terms of biological role, flavonol 7-O-rhamnosyltransferase that catalyzes the transfer of rhamnose from UDP-rhamnose to the 7-OH position of 3-O-glycosylated flavonols, such as kaempferol 3-O-rhamnoside, kaempferol 3-O-glucoside, quercetin 3-O-glucoside, quercetin 3-O-galactoside, quercetin 3-O-rhamnoside and isorhamnetin 3-O-glucoside. Is able to glycosylate the flavonols quercetin and kaempferol to yield quercetin 7-O-rhamnoside and kaempferol 7-O-rhamnoside. Shows a strict specificity for UDP-rhamnose as sugar donor. Does not act on 3-O-glycosylated anthocyanins. The accumulation of kaempferol 3-O-rhamnoside-7-O-rhamnoside inhibits basipetal auxin transport, which influences auxin distribution and plant organ development. The protein is Flavonol 7-O-rhamnosyltransferase of Arabidopsis thaliana (Mouse-ear cress).